Consider the following 494-residue polypeptide: Probable cytosol aminopeptidase (494 aa).

Mn(2+)-binding residues include K260 and D265. K272 is a catalytic residue. Positions 283, 342, and 344 each coordinate Mn(2+). R346 is a catalytic residue.

Belongs to the peptidase M17 family. It depends on Mn(2+) as a cofactor.

It localises to the cytoplasm. It catalyses the reaction Release of an N-terminal amino acid, Xaa-|-Yaa-, in which Xaa is preferably Leu, but may be other amino acids including Pro although not Arg or Lys, and Yaa may be Pro. Amino acid amides and methyl esters are also readily hydrolyzed, but rates on arylamides are exceedingly low.. The enzyme catalyses Release of an N-terminal amino acid, preferentially leucine, but not glutamic or aspartic acids.. Its function is as follows. Presumably involved in the processing and regular turnover of intracellular proteins. Catalyzes the removal of unsubstituted N-terminal amino acids from various peptides. In Bacillus thuringiensis (strain Al Hakam), this protein is Probable cytosol aminopeptidase.